The primary structure comprises 360 residues: Biotin synthase (360 aa).

The tract at residues 1–21 is disordered; the sequence is MTQLNIAPASTDTAAASNNNA. The 228-residue stretch at 62–289 folds into the Radical SAM core domain; that stretch reads NTVQLSTLLS…RAMVRLSAGR (228 aa). Positions 77, 81, and 84 each coordinate [4Fe-4S] cluster. The [2Fe-2S] cluster site is built by Cys121, Cys152, Cys212, and Arg284.

Belongs to the radical SAM superfamily. Biotin synthase family. Homodimer. [4Fe-4S] cluster is required as a cofactor. The cofactor is [2Fe-2S] cluster.

The catalysed reaction is (4R,5S)-dethiobiotin + (sulfur carrier)-SH + 2 reduced [2Fe-2S]-[ferredoxin] + 2 S-adenosyl-L-methionine = (sulfur carrier)-H + biotin + 2 5'-deoxyadenosine + 2 L-methionine + 2 oxidized [2Fe-2S]-[ferredoxin]. Its pathway is cofactor biosynthesis; biotin biosynthesis; biotin from 7,8-diaminononanoate: step 2/2. Its function is as follows. Catalyzes the conversion of dethiobiotin (DTB) to biotin by the insertion of a sulfur atom into dethiobiotin via a radical-based mechanism. This chain is Biotin synthase, found in Paraburkholderia xenovorans (strain LB400).